The following is a 60-amino-acid chain: Large ribosomal subunit protein bL32 (60 aa).

This sequence belongs to the bacterial ribosomal protein bL32 family.

This is Large ribosomal subunit protein bL32 from Streptococcus mutans serotype c (strain ATCC 700610 / UA159).